We begin with the raw amino-acid sequence, 184 residues long: Potassium-transporting ATPase KdpC subunit (184 aa).

The helical transmembrane segment at 10-30 threads the bilayer; it reads LTFLMVVLFAVIYPLAIYGIA.

The protein belongs to the KdpC family. The system is composed of three essential subunits: KdpA, KdpB and KdpC.

It is found in the cell inner membrane. Functionally, part of the high-affinity ATP-driven potassium transport (or Kdp) system, which catalyzes the hydrolysis of ATP coupled with the electrogenic transport of potassium into the cytoplasm. This subunit acts as a catalytic chaperone that increases the ATP-binding affinity of the ATP-hydrolyzing subunit KdpB by the formation of a transient KdpB/KdpC/ATP ternary complex. The protein is Potassium-transporting ATPase KdpC subunit of Flavobacterium psychrophilum (strain ATCC 49511 / DSM 21280 / CIP 103535 / JIP02/86).